Reading from the N-terminus, the 222-residue chain is Transmembrane reductase CYB561D2 (222 aa).

The Cytoplasmic portion of the chain corresponds to 2 to 17 (ALSVETESHIYRALRT). Positions 14–217 (ALRTASGAAA…NQVSNAYLYR (204 aa)) constitute a Cytochrome b561 domain. Residues 18 to 38 (ASGAAAHLVALGFTIFVAVLA) traverse the membrane as a helical segment. Residues 39 to 46 (RPGSSLFS) are Lumenal-facing. Residues 47-67 (WHPVLMSLAFSFLMTEALLMF) traverse the membrane as a helical segment. A heme b-binding site is contributed by His48. Over 68-85 (SPESSLLRSLSRKVRARC) the chain is Cytoplasmic. Heme b-binding residues include His86 and His120. Residues 86–106 (HWVLQLLALLCALLGLGLVIL) traverse the membrane as a helical segment. Topologically, residues 107 to 122 (HKEQLGKAHLTTRHGQ) are lumenal. A helical membrane pass occupies residues 123–143 (AGLLAVLWAGLQCSGGMGLLY). At 144–162 (PKLLPRWPLAKLKLYHATS) the chain is on the cytoplasmic side. Position 159 (His159) interacts with heme b. The chain crosses the membrane as a helical span at residues 163 to 183 (GLVGYLLGSASLLLGMFSLWF). Over 184–186 (TAT) the chain is Lumenal. The helical transmembrane segment at 187 to 207 (VTGGAWYLAVLCPILTSLVIM) threads the bilayer. The Cytoplasmic segment spans residues 208-222 (NQVSNAYLYRKRIQP).

Heme b is required as a cofactor. As to expression, highly expressed in the brain, lung, liver, and kidney. Moderately expressed in the heart, placenta, skeletal muscle, and pancreas.

The protein resides in the endoplasmic reticulum membrane. Its subcellular location is the cytoplasmic vesicle membrane. The enzyme catalyses monodehydro-L-ascorbate radical(out) + L-ascorbate(in) = monodehydro-L-ascorbate radical(in) + L-ascorbate(out). The catalysed reaction is Fe(3+)(out) + L-ascorbate(in) = monodehydro-L-ascorbate radical(in) + Fe(2+)(out) + H(+). In terms of biological role, transmembrane reductase that may use ascorbate as an electron donor in the cytoplasm and transfer electrons across endoplasmic reticulum membranes to reduce monodehydro-L-ascorbate radical and iron cations Fe(3+) in the lumen of that compartment. The chain is Transmembrane reductase CYB561D2 from Mus musculus (Mouse).